A 184-amino-acid chain; its full sequence is MESFSSKSLALQAEKKLLSKMAGRSVAHLFIDETSSEVLDELYRVSKEYTHSRPQAQRVIKDLIKVAIKVAVLHRNGSFGPSELALATRFRQKLRQGAMTALSFGEVDFTFEAAVLAGLLTECRDVLLELVEHHLTPKSHGRIRHVFDHFSDPGLLTALYGPDFTQHLGKICDGLRKLLDEGKL.

The residue at position 3 (Ser-3) is a Phosphoserine; by MAP3K7.

This sequence belongs to the TNFAIP8 family. TNFAIP8L2 subfamily. In terms of assembly, may interact with CASP8; however, such result is unclear since PubMed:19079267 could not reproduce the interaction with CASP8. Interacts with RAC1. Phosphorylated by TAK1/MAP3K7; this phosphorylation triggers association with BTRC and subsequent ubiquitination and degradation. Post-translationally, ubiquitinated in a BTRC-depdent manner; leading to degradation mediated through the proteasome pathway. Expressed in T-cells, B-cells, macrophages, neurons in the brain and brainstem, and stratified squamous epithelia of the esophagus, cervix and skin.

It is found in the cytoplasm. Its subcellular location is the nucleus. The protein resides in the lysosome. Its function is as follows. Acts as a negative regulator of innate and adaptive immunity by maintaining immune homeostasis. Plays a regulatory role in the Toll-like signaling pathway by determining the strength of LPS-induced signaling and gene expression. Inhibits TCR-mediated T-cell activation and negatively regulate T-cell function to prevent hyperresponsiveness. Also inhibits autolysosome formation via negatively modulating MTOR activation by interacting with RAC1 and promoting the disassociation of the RAC1-MTOR complex. Plays an essential role in NK-cell biology by acting as a checkpoint and displaying an expression pattern correlating with NK-cell maturation process and by negatively regulating NK-cell maturation and antitumor immunity. Mechanistically, suppresses IL-15-triggered mTOR activity in NK-cells. The sequence is that of Tumor necrosis factor alpha-induced protein 8-like protein 2 (TNFAIP8L2) from Homo sapiens (Human).